The following is a 145-amino-acid chain: D-aminoacyl-tRNA deacylase (145 aa).

Positions 137 to 138 match the Gly-cisPro motif, important for rejection of L-amino acids motif; sequence GP.

The protein belongs to the DTD family. Homodimer.

Its subcellular location is the cytoplasm. The catalysed reaction is glycyl-tRNA(Ala) + H2O = tRNA(Ala) + glycine + H(+). It catalyses the reaction a D-aminoacyl-tRNA + H2O = a tRNA + a D-alpha-amino acid + H(+). Functionally, an aminoacyl-tRNA editing enzyme that deacylates mischarged D-aminoacyl-tRNAs. Also deacylates mischarged glycyl-tRNA(Ala), protecting cells against glycine mischarging by AlaRS. Acts via tRNA-based rather than protein-based catalysis; rejects L-amino acids rather than detecting D-amino acids in the active site. By recycling D-aminoacyl-tRNA to D-amino acids and free tRNA molecules, this enzyme counteracts the toxicity associated with the formation of D-aminoacyl-tRNA entities in vivo and helps enforce protein L-homochirality. In Pectobacterium atrosepticum (strain SCRI 1043 / ATCC BAA-672) (Erwinia carotovora subsp. atroseptica), this protein is D-aminoacyl-tRNA deacylase.